A 461-amino-acid chain; its full sequence is MVTLSSNSIFATNRDQESSGFAWWAGNARLINLSGKLLGAHVAHAGLIVFWAGAMTLFELAHFIPEKPMYEQGLILIPHIATLGWGVGPGGEVVDTFPFFVVGVVHLISSAVLGFGGVYHAIRGPETLEEYSSFFGYDWKDKNKMTTILGFHLIVLGIGALLLVAKAMFFGGLYDTWAPGGGDVRVITNPTLDPRVIFGYLLKSPFGGEGWIVSVNNLEDVVGGHIWIGLICIAGGIWHILTTPFGWARRAFIWSGEAYLSYSLGALSMMGFIATCFVWFNNTVYPSEFYGPTGPEASQAQAMTFLIRDQKLGANVGSAQGPTGLGKYLMRSPTGEIIFGGETMRFWDFRGPWLEPLRGPNGLDLNKIKNDIQPWQERRAAEYMTHAPLGSLNSVGGVATEINSVNFVSPRSWLATSHFVLAFFFLVGHLWHAGRARAAAAGFEKGIDRESEPVLSMPSLD.

Topologically, residues 1 to 48 (MVTLSSNSIFATNRDQESSGFAWWAGNARLINLSGKLLGAHVAHAGLI) are cytoplasmic. Residues 49–71 (VFWAGAMTLFELAHFIPEKPMYE) traverse the membrane as a helical segment. Residues 72–111 (QGLILIPHIATLGWGVGPGGEVVDTFPFFVVGVVHLISSA) lie on the Lumenal side of the membrane. The helical transmembrane segment at 112–133 (VLGFGGVYHAIRGPETLEEYSS) threads the bilayer. The Cytoplasmic portion of the chain corresponds to 134–155 (FFGYDWKDKNKMTTILGFHLIV). A helical membrane pass occupies residues 156–178 (LGIGALLLVAKAMFFGGLYDTWA). The Lumenal portion of the chain corresponds to 179-232 (PGGGDVRVITNPTLDPRVIFGYLLKSPFGGEGWIVSVNNLEDVVGGHIWIGLIC). The helical transmembrane segment at 233 to 253 (IAGGIWHILTTPFGWARRAFI) threads the bilayer. Topologically, residues 254-268 (WSGEAYLSYSLGALS) are cytoplasmic. A helical transmembrane segment spans residues 269–289 (MMGFIATCFVWFNNTVYPSEF). The Lumenal segment spans residues 290 to 424 (YGPTGPEASQ…ATSHFVLAFF (135 aa)). E355 contributes to the [CaMn4O5] cluster binding site. Residues 425-449 (FLVGHLWHAGRARAAAAGFEKGIDR) form a helical membrane-spanning segment. The Cytoplasmic segment spans residues 450 to 461 (ESEPVLSMPSLD).

As to quaternary structure, PSII is composed of 1 copy each of membrane proteins PsbA, PsbB, PsbC, PsbD, PsbE, PsbF, PsbH, PsbI, PsbJ, PsbK, PsbL, PsbM, PsbT, PsbX, PsbY, PsbZ, Psb30/Ycf12, peripheral proteins PsbO, CyanoQ (PsbQ), PsbU, PsbV and a large number of cofactors. It forms dimeric complexes. Part of a photosystem II (PSII) assembly intermediate complex PSII-I; crystallized from a strain deleted of psbJ, it forms monomeric PSII before addition of the oxygen evolving complex. PSII-I includes 3 assembly factors not found in mature PSII (Psb27, Psb28 and Psb34), and CP43 (this protein) is not in its mature conformation. Binds multiple chlorophylls and provides some of the ligands for the Ca-4Mn-5O cluster of the oxygen-evolving complex. It may also provide a ligand for a Cl- that is required for oxygen evolution. PSII binds additional chlorophylls, carotenoids and specific lipids. is required as a cofactor.

Its subcellular location is the cellular thylakoid membrane. In terms of biological role, one of the components of the core complex of photosystem II (PSII). It binds chlorophyll and helps catalyze the primary light-induced photochemical processes of PSII. PSII is a light-driven water:plastoquinone oxidoreductase, using light energy to abstract electrons from H(2)O, generating O(2) and a proton gradient subsequently used for ATP formation. The protein is Photosystem II CP43 reaction center protein of Thermosynechococcus vestitus (strain NIES-2133 / IAM M-273 / BP-1).